The following is an 825-amino-acid chain: MVLSSSCTTVPHLSSLAVVQLGPWSSRIKKKTDAVAVPAAAGRWRARARAQDTSESAAVAKGSSLTPIVRTDAESRRTRWPTDDDDAEPLVDEIRAMLTSMSDGDISVSAYDTAWVGLVPRLDGGEGPQFPAAVRWIRNNQLPDGSWGDAALFSAYDRLINTLACVVTLTRWSLEPEMRGRGLSFLGRNMWKLATEDEESMPIGFELAFPSLIELAKSLGVHDFPYDHQALQAIYSSREIKVKRIPKEVMHTVPTSILHSLEGMPGLDWARLLKLQSSDGSFLFSPAATAYALMNTGDDRCFSYIDRTVKKFNGGVPNVYPVDLFEHIWAVDRLERLGISRYFQKEIEQCMDYVNRHWTEDGICWARNSDVKEVDDTAMAFRLLRLHGYSVSPDVFKNFEKDGEFFAFVGQSNQAVTGMYNLNRASQISFPGEDVLHRAGPFSYEFLRRKQAEGALRDKWIISKDLPGEVVYTLDFPWYGNLPRVEARDYLEQYGGGDDVWIGKTLYRMPLVNNDVYLELARMDFNHCQALHQLEWQGLKKWYTENRLMDFGVAQEDALRAYFLAAASVYEPCRAAERLAWARAAILANAVSTHLRNSPSFRERLEHSLRCRPSEETDGSWFNSSSGSDAVLVKAVLRLTDSLAREAQPIHGGDPEDIHKLLRSAWAEWVREKADAADSVCNGSSAVEQEGSRMVHDKQTCLLLARMIEISAGRAAGEAASEDGDRRIIQLTGSICDSLKQKMLVSQDPEKNEEMMSHVDDELKLRIREFVQYLLRLGEKKTGSSETRQTFLSIVKSCYYAAHCPPHVVDRHISRVIFEPVSAAK.

A chloroplast-targeting transit peptide spans 1-70; sequence MVLSSSCTTV…KGSSLTPIVR (70 aa). K241 serves as a coordination point for substrate. Positions 373–376 match the DXDD motif motif; the sequence is EVDD. A substrate-binding site is contributed by K459.

The protein belongs to the terpene synthase family. Tpsc subfamily. It depends on Mg(2+) as a cofactor. In terms of tissue distribution, expressed in tassels.

It localises to the plastid. It is found in the chloroplast. The enzyme catalyses (2E,6E,10E)-geranylgeranyl diphosphate = ent-copalyl diphosphate. Its pathway is plant hormone biosynthesis; gibberellin biosynthesis. Involved in gibberellin biosynthesis. Catalyzes the conversion of geranylgeranyl diphosphate to the gibberellin precursor ent-copalyl diphosphate (ent-CPP). Involved in the production of antifungal dolabralexin phytoalexins in response to biotic and abiotic stresses. In response to fungal infection and in associtation with KSL4, is involved in the production dolabradiene, a type of antifungal phytoalexin. This is Ent-copalyl diphosphate synthase 2, chloroplastic from Zea mays (Maize).